A 185-amino-acid chain; its full sequence is Ribosome-recycling factor (185 aa).

It belongs to the RRF family.

It is found in the cytoplasm. Functionally, responsible for the release of ribosomes from messenger RNA at the termination of protein biosynthesis. May increase the efficiency of translation by recycling ribosomes from one round of translation to another. This Saccharophagus degradans (strain 2-40 / ATCC 43961 / DSM 17024) protein is Ribosome-recycling factor.